Reading from the N-terminus, the 474-residue chain is Nuclear hormone receptor family member nhr-91 (474 aa).

The segment at 50–69 (SMTPSFSQTESPNSETDDST) is disordered. Over residues 51–69 (MTPSFSQTESPNSETDDST) the composition is skewed to polar residues. Residues 97–172 (SKLCSVCGDK…KGMLTEAVRE (76 aa)) constitute a DNA-binding region (nuclear receptor). 2 consecutive NR C4-type zinc fingers follow at residues 100-120 (CSVC…CEGC) and 136-155 (CSQD…CQSC). Residues 215–474 (SGKKLIKELV…KNPRRLVFDE (260 aa)) form the NR LBD domain.

This sequence belongs to the nuclear hormone receptor family.

The protein resides in the nucleus. In terms of biological role, orphan nuclear receptor. The polypeptide is Nuclear hormone receptor family member nhr-91 (nhr-91) (Caenorhabditis elegans).